Reading from the N-terminus, the 330-residue chain is MTGSSSQFQQLEKLGEGTYATVYKGRNRTNGQLVALKEINLDSEEGTPSTAIREISLMKELDHENIVTLYDVIHTENKLTLVFEFMDKDLKKYMEAHGNQGALDLKIVKSFIFQLLKGIMFCHDNRVLHRDLKPQNLLINNKGELKLGDFGLARAFGIPFNTFSNEVVTLWYRAPDVLLGSRAYTASIDIWSAGCIFAEMCTGKPLFPGTSNDDQLIKIFRLMGTPNERTWPGVSSYANFKNNWQIFVPQDLRLLIPNLDSMGLNLLSSLLQMRPDARITARQALQHPWFHEISNPNPLMQHLADPYQQSQQQSQQQAQQSQQMDPQTYR.

Residues Phe-8–Phe-290 enclose the Protein kinase domain. Residues Leu-14–Val-22 and Lys-37 contribute to the ATP site. The Proton acceptor role is filled by Asp-131. Positions Met-300–Arg-330 are disordered. Positions Gln-308–Gln-323 are enriched in low complexity.

Belongs to the protein kinase superfamily. CMGC Ser/Thr protein kinase family. CDC2/CDKX subfamily. In terms of assembly, interacts with a number of cyclins.

It carries out the reaction L-seryl-[protein] + ATP = O-phospho-L-seryl-[protein] + ADP + H(+). The catalysed reaction is L-threonyl-[protein] + ATP = O-phospho-L-threonyl-[protein] + ADP + H(+). When phosphate concentrations are high it phosphorylates the PHO4 transcription factor thus establishing repression. The protein is Negative regulator of the PHO system (PHO85) of Debaryomyces hansenii (strain ATCC 36239 / CBS 767 / BCRC 21394 / JCM 1990 / NBRC 0083 / IGC 2968) (Yeast).